Consider the following 242-residue polypeptide: Small ribosomal subunit protein uS2 (242 aa).

It belongs to the universal ribosomal protein uS2 family.

The chain is Small ribosomal subunit protein uS2 from Shewanella putrefaciens (strain CN-32 / ATCC BAA-453).